The sequence spans 184 residues: NADH-quinone oxidoreductase subunit B (184 aa).

4 residues coordinate [4Fe-4S] cluster: cysteine 63, cysteine 64, cysteine 128, and cysteine 158.

It belongs to the complex I 20 kDa subunit family. As to quaternary structure, NDH-1 is composed of 14 different subunits. Subunits NuoB, C, D, E, F, and G constitute the peripheral sector of the complex. [4Fe-4S] cluster serves as cofactor.

The protein localises to the cell inner membrane. The enzyme catalyses a quinone + NADH + 5 H(+)(in) = a quinol + NAD(+) + 4 H(+)(out). Its function is as follows. NDH-1 shuttles electrons from NADH, via FMN and iron-sulfur (Fe-S) centers, to quinones in the respiratory chain. The immediate electron acceptor for the enzyme in this species is believed to be ubiquinone. Couples the redox reaction to proton translocation (for every two electrons transferred, four hydrogen ions are translocated across the cytoplasmic membrane), and thus conserves the redox energy in a proton gradient. This is NADH-quinone oxidoreductase subunit B from Xylella fastidiosa (strain M23).